The sequence spans 412 residues: Nuclear hormone receptor family member nhr-61 (412 aa).

Positions 1-19 are enriched in low complexity; sequence MIVDSISSSTASTSSSSPT. The tract at residues 1–23 is disordered; the sequence is MIVDSISSSTASTSSSSPTRGTP. Positions 27–102 form a DNA-binding region, nuclear receptor; that stretch reads SLQCAVCGDV…VGMNPRAVQG (76 aa). 2 NR C4-type zinc fingers span residues 30–50 and 66–90; these read CAVC…CNGC and CRHG…LTRC. Residues 144–407 form the NR LBD domain; that stretch reads KKEQIIDNLR…DWSQELRDHR (264 aa).

It belongs to the nuclear hormone receptor family.

The protein resides in the nucleus. Functionally, orphan nuclear receptor. In Caenorhabditis elegans, this protein is Nuclear hormone receptor family member nhr-61 (nhr-61).